The primary structure comprises 1194 residues: Peroxisomal ATPase PEX1 (1194 aa).

The interval 220-255 is disordered; the sequence is KTRQRRMSHQGKSVKAKSLASTRHGKRRDDGSGPSG. A compositionally biased stretch (basic residues) spans 221-234; it reads TRQRRMSHQGKSVK. Positions 538-730 are AAA-cassette D1; it reads RSASVLLTGA…GPEPTLKIEK (193 aa). ATP-binding positions include 546–553 and 849–856; these read GARGSGKT and GYPGCGKT. Positions 844 to 1028 are AAA-cassette D2; that stretch reads GLLLYGYPGC…LYNAHLEAIH (185 aa). Disordered stretches follow at residues 1062–1084, 1116–1139, and 1174–1194; these read YISFSMGNKDSTGEPSTQPLTNG, QVQQQQSQTNQAQEEEKGDDEPVI, and RSGEMPSGQSSTEIGGRSSLM. Positions 1066-1084 are enriched in polar residues; the sequence is SMGNKDSTGEPSTQPLTNG. Residues 1116–1127 show a composition bias toward low complexity; that stretch reads QVQQQQSQTNQA.

The protein belongs to the AAA ATPase family. In terms of assembly, interacts with PEX6; forming the PEX1-PEX6 AAA ATPase complex, which is composed of a heterohexamer formed by a trimer of PEX1-PEX6 dimers.

It is found in the cytoplasm. Its subcellular location is the cytosol. It localises to the peroxisome membrane. The enzyme catalyses ATP + H2O = ADP + phosphate + H(+). In terms of biological role, component of the PEX1-PEX6 AAA ATPase complex, a protein dislocase complex that mediates the ATP-dependent extraction of the PEX5 receptor from peroxisomal membranes, an essential step for PEX5 recycling. Specifically recognizes PEX5 monoubiquitinated at 'Cys-6', and pulls it out of the peroxisome lumen through the PEX2-PEX10-PEX12 retrotranslocation channel. Extraction by the PEX1-PEX6 AAA ATPase complex is accompanied by unfolding of the TPR repeats and release of bound cargo from PEX5. Regulates autophagy and biogenesis of peroxisomes and Woronin bodies. Plays important roles in mycelial growth and development and stress response. Is also essential for conidiation and fatty acid utilization. Required for nematode predation via trap formation. This Arthrobotrys oligospora (strain ATCC 24927 / CBS 115.81 / DSM 1491) (Nematode-trapping fungus) protein is Peroxisomal ATPase PEX1.